Here is a 511-residue protein sequence, read N- to C-terminus: Maturase K (511 aa).

Belongs to the intron maturase 2 family. MatK subfamily.

It is found in the plastid. It localises to the chloroplast. Usually encoded in the trnK tRNA gene intron. Probably assists in splicing its own and other chloroplast group II introns. The polypeptide is Maturase K (Hordeum vulgare subsp. spontaneum (Wild barley)).